The primary structure comprises 315 residues: MSESLRIIFAGTPDFAARHLDALLSSGHNVVSVFTQPDRPAGRGKKLMPSPVKVLAEEKGLPVFQPVSLRPQENQQLVADLQADVMVVVAYGLILPKAVLEMPRLGCINVHGSLLPRWRGAAPIQRSLWAGDAETGVTIMQMDVGLDTGDMLYKLSCPITAEDTSGTLYDKLAELGPQGLITTLKQLADGTAKPEVQDETLVTYAEKLSKEEARIDWSLSAAQLERCIRAFNPWPMSWLEIEGQPVKVWKASVIDTATNAAPGTILEANKQGIQVATGDGILNLLSLQPAGKKAMSAQDLLNSRREWFVPGNRLV.

113 to 116 contacts (6S)-5,6,7,8-tetrahydrofolate; it reads SLLP.

Belongs to the Fmt family.

It catalyses the reaction L-methionyl-tRNA(fMet) + (6R)-10-formyltetrahydrofolate = N-formyl-L-methionyl-tRNA(fMet) + (6S)-5,6,7,8-tetrahydrofolate + H(+). Its function is as follows. Attaches a formyl group to the free amino group of methionyl-tRNA(fMet). The formyl group appears to play a dual role in the initiator identity of N-formylmethionyl-tRNA by promoting its recognition by IF2 and preventing the misappropriation of this tRNA by the elongation apparatus. In Escherichia coli (strain SE11), this protein is Methionyl-tRNA formyltransferase.